A 348-amino-acid chain; its full sequence is Peroxidase 40 (348 aa).

An N-terminal signal peptide occupies residues 1 to 21 (MKNLFNLFLMFFFAMPILSLS). A glycan (N-linked (GlcNAc...) asparagine) is linked at asparagine 26. Cystine bridges form between cysteine 59-cysteine 139, cysteine 92-cysteine 97, cysteine 145-cysteine 344, and cysteine 224-cysteine 256. Catalysis depends on histidine 90, which acts as the Proton acceptor. 5 residues coordinate Ca(2+): aspartate 91, valine 94, glycine 96, aspartate 98, and serine 100. The disordered stretch occupies residues 170–189 (GRKDSRTASKQAATNGLPSP). A compositionally biased stretch (polar residues) spans 177 to 189 (ASKQAATNGLPSP). Proline 187 provides a ligand contact to substrate. Residue asparagine 190 is glycosylated (N-linked (GlcNAc...) asparagine). Histidine 217 lines the heme b pocket. Threonine 218 lines the Ca(2+) pocket. Residues aspartate 269, threonine 272, and aspartate 277 each coordinate Ca(2+).

The protein belongs to the peroxidase family. Classical plant (class III) peroxidase subfamily. Heme b serves as cofactor. The cofactor is Ca(2+).

Its subcellular location is the secreted. It carries out the reaction 2 a phenolic donor + H2O2 = 2 a phenolic radical donor + 2 H2O. Removal of H(2)O(2), oxidation of toxic reductants, biosynthesis and degradation of lignin, suberization, auxin catabolism, response to environmental stresses such as wounding, pathogen attack and oxidative stress. These functions might be dependent on each isozyme/isoform in each plant tissue. The chain is Peroxidase 40 (PER40) from Arabidopsis thaliana (Mouse-ear cress).